The chain runs to 151 residues: Acidic phospholipase A2 5 (151 aa).

Residues 1 to 27 (MYPAHLLVLLAVCVSLLGAASIPARPL) form the signal peptide. Intrachain disulfides connect cysteine 38/cysteine 104, cysteine 54/cysteine 151, cysteine 56/cysteine 72, cysteine 71/cysteine 132, cysteine 78/cysteine 125, cysteine 88/cysteine 118, and cysteine 111/cysteine 123. Ca(2+) is bound by residues tyrosine 55, glycine 57, and glycine 59. Histidine 75 is a catalytic residue. Aspartate 76 contributes to the Ca(2+) binding site. Residue aspartate 126 is part of the active site.

It belongs to the phospholipase A2 family. Group I subfamily. D49 sub-subfamily. Requires Ca(2+) as cofactor. As to expression, expressed by the venom gland.

The protein localises to the secreted. The enzyme catalyses a 1,2-diacyl-sn-glycero-3-phosphocholine + H2O = a 1-acyl-sn-glycero-3-phosphocholine + a fatty acid + H(+). Its function is as follows. PLA2 catalyzes the calcium-dependent hydrolysis of the 2-acyl groups in 3-sn-phosphoglycerides. This is Acidic phospholipase A2 5 from Tropidechis carinatus (Australian rough-scaled snake).